The sequence spans 237 residues: Ribose-5-phosphate isomerase A (237 aa).

Substrate is bound by residues 29-32 (SGST), 86-89 (DGAD), and 99-102 (KGGG). Catalysis depends on Glu108, which acts as the Proton acceptor. Lys126 provides a ligand contact to substrate.

The protein belongs to the ribose 5-phosphate isomerase family. In terms of assembly, homodimer.

It carries out the reaction aldehydo-D-ribose 5-phosphate = D-ribulose 5-phosphate. The protein operates within carbohydrate degradation; pentose phosphate pathway; D-ribose 5-phosphate from D-ribulose 5-phosphate (non-oxidative stage): step 1/1. Catalyzes the reversible conversion of ribose-5-phosphate to ribulose 5-phosphate. The polypeptide is Ribose-5-phosphate isomerase A (Prochlorococcus marinus (strain MIT 9312)).